A 244-amino-acid polypeptide reads, in one-letter code: Small ribosomal subunit protein uS2 (244 aa).

Belongs to the universal ribosomal protein uS2 family.

This Exiguobacterium sibiricum (strain DSM 17290 / CCUG 55495 / CIP 109462 / JCM 13490 / 255-15) protein is Small ribosomal subunit protein uS2.